We begin with the raw amino-acid sequence, 770 residues long: Conserved oligomeric Golgi complex subunit 7 (770 aa).

The protein belongs to the COG7 family. As to quaternary structure, component of the conserved oligomeric Golgi complex which is composed of eight different subunits and is required for normal Golgi morphology and localization.

The protein localises to the golgi apparatus membrane. Its function is as follows. Required for normal Golgi function. The sequence is that of Conserved oligomeric Golgi complex subunit 7 (COG7) from Homo sapiens (Human).